Here is a 271-residue protein sequence, read N- to C-terminus: Small ribosomal subunit protein uS2 (271 aa).

The disordered stretch occupies residues 235–271 (FDAKNPLKPQNYNAPNKRPYQDSPRKPSYQNQNQNQI). Residues 262 to 271 (SYQNQNQNQI) show a composition bias toward polar residues.

It belongs to the universal ribosomal protein uS2 family.

In Onion yellows phytoplasma (strain OY-M), this protein is Small ribosomal subunit protein uS2.